A 159-amino-acid chain; its full sequence is SsrA-binding protein (159 aa).

The protein belongs to the SmpB family.

It localises to the cytoplasm. Required for rescue of stalled ribosomes mediated by trans-translation. Binds to transfer-messenger RNA (tmRNA), required for stable association of tmRNA with ribosomes. tmRNA and SmpB together mimic tRNA shape, replacing the anticodon stem-loop with SmpB. tmRNA is encoded by the ssrA gene; the 2 termini fold to resemble tRNA(Ala) and it encodes a 'tag peptide', a short internal open reading frame. During trans-translation Ala-aminoacylated tmRNA acts like a tRNA, entering the A-site of stalled ribosomes, displacing the stalled mRNA. The ribosome then switches to translate the ORF on the tmRNA; the nascent peptide is terminated with the 'tag peptide' encoded by the tmRNA and targeted for degradation. The ribosome is freed to recommence translation, which seems to be the essential function of trans-translation. The polypeptide is SsrA-binding protein (Frankia casuarinae (strain DSM 45818 / CECT 9043 / HFP020203 / CcI3)).